The following is a 469-amino-acid chain: Glutamine synthetase (469 aa).

Positions 13 to 97 constitute a GS beta-grasp domain; that stretch reads KEVRYVDLRF…LRCDIVEPAT (85 aa). Residues 105–469 form the GS catalytic domain; that stretch reads PRSIAKRAEA…PVEFDMYYSL (365 aa). Mg(2+) contacts are provided by E130 and E132. Residue E208 coordinates ATP. The Mg(2+) site is built by E213 and E221. L-glutamate-binding positions include 265–266 and G266; that span reads NG. H270 contributes to the Mg(2+) binding site. Residues 272–274 and S274 each bind ATP; that span reads HQS. 3 residues coordinate L-glutamate: R322, E328, and R340. 3 residues coordinate ATP: R340, R345, and K353. E358 is a Mg(2+) binding site. R360 is an L-glutamate binding site. An O-AMP-tyrosine modification is found at Y398.

Belongs to the glutamine synthetase family. As to quaternary structure, oligomer of 12 subunits arranged in the form of two hexameric ring. Requires Mg(2+) as cofactor.

It localises to the cytoplasm. The catalysed reaction is L-glutamate + NH4(+) + ATP = L-glutamine + ADP + phosphate + H(+). Its activity is regulated as follows. The activity of this enzyme could be controlled by adenylation under conditions of abundant glutamine. In terms of biological role, catalyzes the ATP-dependent biosynthesis of glutamine from glutamate and ammonia. The chain is Glutamine synthetase from Methylococcus capsulatus (strain ATCC 33009 / NCIMB 11132 / Bath).